A 373-amino-acid polypeptide reads, in one-letter code: Chaperone protein DnaJ (373 aa).

The J domain maps to 4-68 (NYYQILGVSK…QTRAAYDRLG (65 aa)). A CR-type zinc finger spans residues 136–214 (GIEKNISFSS…CHGMGRYHKQ (79 aa)). Residues C149, C152, C166, C169, C188, C191, C202, and C205 each contribute to the Zn(2+) site. CXXCXGXG motif repeat units follow at residues 149 to 156 (CDTCHGSG), 166 to 173 (CDACSGVG), 188 to 195 (CHKCQGNG), and 202 to 209 (CKKCHGMG).

Belongs to the DnaJ family. Homodimer. Zn(2+) is required as a cofactor.

It localises to the cytoplasm. In terms of biological role, participates actively in the response to hyperosmotic and heat shock by preventing the aggregation of stress-denatured proteins and by disaggregating proteins, also in an autonomous, DnaK-independent fashion. Unfolded proteins bind initially to DnaJ; upon interaction with the DnaJ-bound protein, DnaK hydrolyzes its bound ATP, resulting in the formation of a stable complex. GrpE releases ADP from DnaK; ATP binding to DnaK triggers the release of the substrate protein, thus completing the reaction cycle. Several rounds of ATP-dependent interactions between DnaJ, DnaK and GrpE are required for fully efficient folding. Also involved, together with DnaK and GrpE, in the DNA replication of plasmids through activation of initiation proteins. This chain is Chaperone protein DnaJ, found in Rickettsia peacockii (strain Rustic).